Consider the following 106-residue polypeptide: Large ribosomal subunit protein uL24 (106 aa).

It belongs to the universal ribosomal protein uL24 family. As to quaternary structure, part of the 50S ribosomal subunit.

In terms of biological role, one of two assembly initiator proteins, it binds directly to the 5'-end of the 23S rRNA, where it nucleates assembly of the 50S subunit. Its function is as follows. One of the proteins that surrounds the polypeptide exit tunnel on the outside of the subunit. The chain is Large ribosomal subunit protein uL24 from Clostridium acetobutylicum (strain ATCC 824 / DSM 792 / JCM 1419 / IAM 19013 / LMG 5710 / NBRC 13948 / NRRL B-527 / VKM B-1787 / 2291 / W).